The primary structure comprises 273 residues: MRKDGARLALPLFDPRHDPGPDFAALVSRDAARTVPTSGDGSLGAQVPHGTTIAALRFAGGVVIAGDRRATEGNFIANRTIEKVFPADRFSGVGIAGAAGPAVEMVRIFQVQLEHYEKVEGKALSLEGKANQLAQMIRQNLPLAMQGLVVMPLFAGWDAERSEGRIFTFDVAGGRYEEVAYYAIGSGGRDARATLKLGWRPGLDEAGAVHLAVQALYEAAQEDAATGGPDALRGIFPVVAVIDREGYRRIDDARLEEIAVELDQAVRERGARR.

Residues M1–G50 constitute a propeptide, removed in mature form; by autocatalysis. T51 serves as the catalytic Nucleophile.

Belongs to the peptidase T1B family. In terms of assembly, the 20S proteasome core is composed of 14 alpha and 14 beta subunits that assemble into four stacked heptameric rings, resulting in a barrel-shaped structure. The two inner rings, each composed of seven catalytic beta subunits, are sandwiched by two outer rings, each composed of seven alpha subunits. The catalytic chamber with the active sites is on the inside of the barrel. Has a gated structure, the ends of the cylinder being occluded by the N-termini of the alpha-subunits. Is capped by the proteasome-associated ATPase, ARC.

It is found in the cytoplasm. It carries out the reaction Cleavage of peptide bonds with very broad specificity.. The protein operates within protein degradation; proteasomal Pup-dependent pathway. With respect to regulation, the formation of the proteasomal ATPase ARC-20S proteasome complex, likely via the docking of the C-termini of ARC into the intersubunit pockets in the alpha-rings, may trigger opening of the gate for substrate entry. Interconversion between the open-gate and close-gate conformations leads to a dynamic regulation of the 20S proteasome proteolysis activity. Functionally, component of the proteasome core, a large protease complex with broad specificity involved in protein degradation. The protein is Proteasome subunit beta of Acidimicrobium ferrooxidans (strain DSM 10331 / JCM 15462 / NBRC 103882 / ICP).